A 197-amino-acid chain; its full sequence is Transcription factor FapR (197 aa).

It belongs to the FapR family.

Functionally, transcriptional factor involved in regulation of membrane lipid biosynthesis by repressing genes involved in fatty acid and phospholipid metabolism. This is Transcription factor FapR from Bacillus cytotoxicus (strain DSM 22905 / CIP 110041 / 391-98 / NVH 391-98).